Consider the following 194-residue polypeptide: Fe/S biogenesis protein NfuA (194 aa).

The [4Fe-4S] cluster site is built by Cys-151 and Cys-154.

Belongs to the NfuA family. In terms of assembly, homodimer. The cofactor is [4Fe-4S] cluster.

Its function is as follows. Involved in iron-sulfur cluster biogenesis. Binds a 4Fe-4S cluster, can transfer this cluster to apoproteins, and thereby intervenes in the maturation of Fe/S proteins. Could also act as a scaffold/chaperone for damaged Fe/S proteins. The sequence is that of Fe/S biogenesis protein NfuA from Photobacterium profundum (strain SS9).